The primary structure comprises 307 residues: Urease accessory protein UreD (307 aa).

This sequence belongs to the UreD family. As to quaternary structure, ureD, UreF and UreG form a complex that acts as a GTP-hydrolysis-dependent molecular chaperone, activating the urease apoprotein by helping to assemble the nickel containing metallocenter of UreC. The UreE protein probably delivers the nickel.

The protein localises to the cytoplasm. Required for maturation of urease via the functional incorporation of the urease nickel metallocenter. In Prochlorococcus marinus (strain NATL2A), this protein is Urease accessory protein UreD.